The following is a 260-amino-acid chain: 4-hydroxy-tetrahydrodipicolinate reductase (260 aa).

NAD(+) contacts are provided by residues 8-13, E35, 91-93, and 115-118; these read GAAGRM, GTT, and APNM. Catalysis depends on H148, which acts as the Proton donor/acceptor. H149 contacts (S)-2,3,4,5-tetrahydrodipicolinate. Catalysis depends on K152, which acts as the Proton donor. 158–159 is a binding site for (S)-2,3,4,5-tetrahydrodipicolinate; it reads GT.

It belongs to the DapB family.

The protein resides in the cytoplasm. The catalysed reaction is (S)-2,3,4,5-tetrahydrodipicolinate + NAD(+) + H2O = (2S,4S)-4-hydroxy-2,3,4,5-tetrahydrodipicolinate + NADH + H(+). It catalyses the reaction (S)-2,3,4,5-tetrahydrodipicolinate + NADP(+) + H2O = (2S,4S)-4-hydroxy-2,3,4,5-tetrahydrodipicolinate + NADPH + H(+). Its pathway is amino-acid biosynthesis; L-lysine biosynthesis via DAP pathway; (S)-tetrahydrodipicolinate from L-aspartate: step 4/4. Catalyzes the conversion of 4-hydroxy-tetrahydrodipicolinate (HTPA) to tetrahydrodipicolinate. The polypeptide is 4-hydroxy-tetrahydrodipicolinate reductase (Rubrobacter xylanophilus (strain DSM 9941 / JCM 11954 / NBRC 16129 / PRD-1)).